We begin with the raw amino-acid sequence, 902 residues long: Protein translocase subunit SecA (902 aa).

Residues glutamine 87, 105 to 109, and aspartate 512 each bind ATP; that span reads GEGKT. A disordered region spans residues 851 to 902; the sequence is LARQQQLSHQAPVEELTQGSAAAAQEGRKVGRNDPCPCGSGKKFKHCHGKLQ. Zn(2+) is bound by residues cysteine 886, cysteine 888, cysteine 897, and histidine 898. Positions 892 to 902 are enriched in basic residues; it reads KKFKHCHGKLQ.

Belongs to the SecA family. As to quaternary structure, monomer and homodimer. Part of the essential Sec protein translocation apparatus which comprises SecA, SecYEG and auxiliary proteins SecDF-YajC and YidC. The cofactor is Zn(2+).

It localises to the cell inner membrane. It is found in the cytoplasm. It catalyses the reaction ATP + H2O + cellular proteinSide 1 = ADP + phosphate + cellular proteinSide 2.. Part of the Sec protein translocase complex. Interacts with the SecYEG preprotein conducting channel. Has a central role in coupling the hydrolysis of ATP to the transfer of proteins into and across the cell membrane, serving both as a receptor for the preprotein-SecB complex and as an ATP-driven molecular motor driving the stepwise translocation of polypeptide chains across the membrane. The chain is Protein translocase subunit SecA from Sodalis glossinidius (strain morsitans).